The sequence spans 90 residues: Small ribosomal subunit protein bS16 (90 aa).

This sequence belongs to the bacterial ribosomal protein bS16 family.

The chain is Small ribosomal subunit protein bS16 from Lactiplantibacillus plantarum (strain ATCC BAA-793 / NCIMB 8826 / WCFS1) (Lactobacillus plantarum).